Reading from the N-terminus, the 462-residue chain is Cysteine--tRNA ligase (462 aa).

Cys28 serves as a coordination point for Zn(2+). Residues 30 to 40 (ITVYDLCHIGH) carry the 'HIGH' region motif. Positions 210, 235, and 239 each coordinate Zn(2+). A 'KMSKS' region motif is present at residues 267-271 (KMSKS). Lys270 contacts ATP.

The protein belongs to the class-I aminoacyl-tRNA synthetase family. In terms of assembly, monomer. Requires Zn(2+) as cofactor.

It is found in the cytoplasm. It catalyses the reaction tRNA(Cys) + L-cysteine + ATP = L-cysteinyl-tRNA(Cys) + AMP + diphosphate. In Erwinia tasmaniensis (strain DSM 17950 / CFBP 7177 / CIP 109463 / NCPPB 4357 / Et1/99), this protein is Cysteine--tRNA ligase.